Consider the following 491-residue polypeptide: MVFGEFFHRPGQDEELVNLNVGGFKQSVDQSTLLRFPHTRLGKLLTCHSEEAILELCDDYSVADKEYYFDRNPSLFRYVLNFYYTGKLHVMEELCVFSFCQEIEYWGINELFIDSCCSSRYQERKEESHEKDWDQKSNDVSTDSSFEESSLFEKELEKFDELRFGQLRKKIWIRMENPAYCLSAKLIAISSLSVVLASIVAMCVHSMSEFQNEDGEVDDPVLEGVEIACIAWFTGELAIRLVAAPSQKKFWKNPLNIIDFVSIIPFYATLAVDTKEEESEDIENMGKVVQILRLMRIFRILKLARHSVGLRSLGATLRHSYHEVGLLLLFLSVGISIFSVLIYSVEKDELASSLTSIPICWWWATISMTTVGYGDTHPVTLAGKIIASTCIICGILVVALPITIIFNKFSKYYQKQKDMDVDQCSEDPPEKCHELPYFNIRDVYAQQVHAFITSLSSIGIVVSDPDSTDASSVEDNEDAYNTASLENCTAK.

The Cytoplasmic segment spans residues 1-182; sequence MVFGEFFHRP…IRMENPAYCL (182 aa). A helical transmembrane segment spans residues 183-204; that stretch reads SAKLIAISSLSVVLASIVAMCV. The Extracellular portion of the chain corresponds to 205–220; the sequence is HSMSEFQNEDGEVDDP. Residues 221 to 243 traverse the membrane as a helical segment; the sequence is VLEGVEIACIAWFTGELAIRLVA. Residues 244 to 254 lie on the Cytoplasmic side of the membrane; that stretch reads APSQKKFWKNP. A helical transmembrane segment spans residues 255 to 275; sequence LNIIDFVSIIPFYATLAVDTK. Over 276-285 the chain is Extracellular; that stretch reads EEESEDIENM. Residues 286–306 form a helical; Voltage-sensor membrane-spanning segment; it reads GKVVQILRLMRIFRILKLARH. The Cytoplasmic portion of the chain corresponds to 307 to 321; it reads SVGLRSLGATLRHSY. The helical transmembrane segment at 322–343 threads the bilayer; sequence HEVGLLLLFLSVGISIFSVLIY. Residues 344 to 357 are Extracellular-facing; it reads SVEKDELASSLTSI. The segment at residues 358 to 369 is an intramembrane region (helical); it reads PICWWWATISMT. Positions 370–375 match the Selectivity filter motif; the sequence is TVGYGD. Residues 370–377 lie within the membrane without spanning it; it reads TVGYGDTH. Residues 378 to 384 lie on the Extracellular side of the membrane; that stretch reads PVTLAGK. Residues 385 to 413 traverse the membrane as a helical segment; it reads IIASTCIICGILVVALPITIIFNKFSKYY. Residues 414-491 are Cytoplasmic-facing; that stretch reads QKQKDMDVDQ…TASLENCTAK (78 aa).

The protein belongs to the potassium channel family. S (TC 1.A.1.2) subfamily. Kv9.3/KCNS3 sub-subfamily. In terms of assembly, heterotetramer with KCNB1. Does not form homomultimers. As to expression, expressed in myocytes. Detected in lung, spleen, brain and heart.

The protein localises to the cell membrane. Functionally, potassium channel regulatory subunit that modulates the delayed rectifier potassium channel activity of KCNB1 by namely slowing down the deactivation and inactivation time constants. While it does not form functional channel on its own, it can form functional heterotetrameric channels with KCNB1. This Rattus norvegicus (Rat) protein is Delayed-rectifier potassium channel regulatory subunit KCNS3.